The sequence spans 356 residues: Phospho-N-acetylmuramoyl-pentapeptide-transferase (356 aa).

10 helical membrane passes run 25–45 (TVAAMLTSGLIVFLFGPSIIS), 70–90 (GTPTMGGLMILSGVVISALLW), 93–113 (LFNIYLWVSLFVMLFFGAIGF), 138–158 (FLVASIASFIILQVGSPGLAL), 164–184 (YFINLGWFFIPFSACVVVGLG), 195–215 (GLAIVPVMVASLSFALIAYLS), 232–252 (VGELAVLLGAVFGAGLGFLWF), 258–278 (AIFMGDTGSLALGGLLGIVSV), 284–304 (IVLIFIGGLFVLETLSVIIQV), and 333–353 (QIVVRFWIIAIVLALIGLSTL).

This sequence belongs to the glycosyltransferase 4 family. MraY subfamily. The cofactor is Mg(2+).

Its subcellular location is the cell inner membrane. It catalyses the reaction UDP-N-acetyl-alpha-D-muramoyl-L-alanyl-gamma-D-glutamyl-meso-2,6-diaminopimeloyl-D-alanyl-D-alanine + di-trans,octa-cis-undecaprenyl phosphate = di-trans,octa-cis-undecaprenyl diphospho-N-acetyl-alpha-D-muramoyl-L-alanyl-D-glutamyl-meso-2,6-diaminopimeloyl-D-alanyl-D-alanine + UMP. It participates in cell wall biogenesis; peptidoglycan biosynthesis. Its function is as follows. Catalyzes the initial step of the lipid cycle reactions in the biosynthesis of the cell wall peptidoglycan: transfers peptidoglycan precursor phospho-MurNAc-pentapeptide from UDP-MurNAc-pentapeptide onto the lipid carrier undecaprenyl phosphate, yielding undecaprenyl-pyrophosphoryl-MurNAc-pentapeptide, known as lipid I. This chain is Phospho-N-acetylmuramoyl-pentapeptide-transferase, found in Bartonella bacilliformis (strain ATCC 35685 / KC583 / Herrer 020/F12,63).